Reading from the N-terminus, the 151-residue chain is uncharacterized protein (151 aa).

Helical transmembrane passes span 8-28 (GIGS…EFFE), 60-80 (WHVA…GVLT), 82-102 (FSAL…HADS), and 113-133 (LPLI…GKLS).

The protein belongs to the DoxX family.

It is found in the cell membrane. This is an uncharacterized protein from Haemophilus influenzae (strain ATCC 51907 / DSM 11121 / KW20 / Rd).